Consider the following 602-residue polypeptide: Exo-poly-alpha-D-galacturonosidase (602 aa).

Positions 1 to 27 are cleaved as a signal peptide; the sequence is MKVITFSRRSALASIVATCLMSTPALA. Residues 32-149 enclose the Fibronectin type-III domain; it reads APQKLQIPTL…TVTTTTTAVP (118 aa). D395 serves as the catalytic Proton donor. H428 is an active-site residue.

Belongs to the glycosyl hydrolase 28 family.

The protein localises to the secreted. It catalyses the reaction [(1-&gt;4)-alpha-D-galacturonosyl](n) + H2O = alpha-D-galacturonosyl-(1-&gt;4)-D-galacturonate + [(1-&gt;4)-alpha-D-galacturonosyl](n-2). Its function is as follows. Contributes significantly to bacterial utilization of polygalacturonate and the induction of pectate lyase in the presence of extracellular pectic polymers. In Dickeya chrysanthemi (Pectobacterium chrysanthemi), this protein is Exo-poly-alpha-D-galacturonosidase (pehX).